Reading from the N-terminus, the 590-residue chain is Glypican-3 (590 aa).

The N-terminal stretch at Met-1–Ser-25 is a signal peptide. Disulfide bonds link Cys-30–Cys-67, Cys-60–Cys-255, Cys-68–Cys-258, Cys-190–Cys-342, Cys-245–Cys-278, Cys-267–Cys-418, and Cys-271–Cys-406. N-linked (GlcNAc...) asparagine glycans are attached at residues Asn-119 and Asn-234. An N-linked (GlcNAc...) asparagine glycan is attached at Asn-414. Disordered regions lie at residues Pro-429–Pro-450 and Trp-476–Gly-520. Over residues Thr-495 to Cys-513 the composition is skewed to acidic residues. O-linked (Xyl...) (glycosaminoglycan) serine glycosylation is found at Ser-504 and Ser-517.

This sequence belongs to the glypican family. In terms of assembly, heterodimer; disulfide-linked. Cleavage by a furin-like convertase results in production of alpha and beta chains which form a disulfide-linked heterodimer. In terms of processing, O-glycosylated; contains heparan sulfate and/or chondroitin sulfate. Post-translationally, cleaved intracellularly by a furin-like convertase to generate 2 subunits, alpha and beta, which remain associated through disulfide bonds and are associated with the cell surface via the GPI-anchor. This processing is essential for its role in inhibition of hedgehog signaling. A second proteolytic event may result in cleavage of the protein on the cell surface, separating it from the GPI-anchor and leading to its shedding from the cell surface. In terms of tissue distribution, maternally expressed and is almost ubiquitous during blastula and gastrula stages but becomes restricted to the prospective hindbrain by 24 hours post-fertilization.

It is found in the cell membrane. In terms of biological role, cell surface proteoglycan. Negatively regulates the hedgehog signaling pathway. Positively regulates the canonical and non-canonical Wnt signaling pathways. Binds to CD81 which decreases the availability of free CD81 for binding to the transcriptional repressor HHEX, resulting in nuclear translocation of HHEX and transcriptional repression. Inhibits the dipeptidyl peptidase activity of DPP4. Plays a role in limb patterning and skeletal development. Modulates the effects of growth factors on renal branching morphogenesis. Required for coronary vascular development. Plays a role in regulating cell movements during gastrulation. This is Glypican-3 from Danio rerio (Zebrafish).